Here is a 133-residue protein sequence, read N- to C-terminus: NADPH-dependent 7-cyano-7-deazaguanine reductase (133 aa).

Cysteine 46 serves as the catalytic Thioimide intermediate. Aspartate 53 serves as the catalytic Proton donor. Residues 68-70 and 87-88 contribute to the substrate site; these read VEL and HE.

This sequence belongs to the GTP cyclohydrolase I family. QueF type 1 subfamily.

It localises to the cytoplasm. It catalyses the reaction 7-aminomethyl-7-carbaguanine + 2 NADP(+) = 7-cyano-7-deazaguanine + 2 NADPH + 3 H(+). The protein operates within tRNA modification; tRNA-queuosine biosynthesis. In terms of biological role, catalyzes the NADPH-dependent reduction of 7-cyano-7-deazaguanine (preQ0) to 7-aminomethyl-7-deazaguanine (preQ1). This chain is NADPH-dependent 7-cyano-7-deazaguanine reductase, found in Parasynechococcus marenigrum (strain WH8102).